The sequence spans 205 residues: Peptidyl-tRNA hydrolase (205 aa).

Tyrosine 14 contacts tRNA. Histidine 19 acts as the Proton acceptor in catalysis. TRNA contacts are provided by tyrosine 68, asparagine 70, and asparagine 116.

The protein belongs to the PTH family. As to quaternary structure, monomer.

The protein resides in the cytoplasm. The enzyme catalyses an N-acyl-L-alpha-aminoacyl-tRNA + H2O = an N-acyl-L-amino acid + a tRNA + H(+). In terms of biological role, hydrolyzes ribosome-free peptidyl-tRNAs (with 1 or more amino acids incorporated), which drop off the ribosome during protein synthesis, or as a result of ribosome stalling. Catalyzes the release of premature peptidyl moieties from peptidyl-tRNA molecules trapped in stalled 50S ribosomal subunits, and thus maintains levels of free tRNAs and 50S ribosomes. This Caulobacter vibrioides (strain ATCC 19089 / CIP 103742 / CB 15) (Caulobacter crescentus) protein is Peptidyl-tRNA hydrolase.